Here is a 273-residue protein sequence, read N- to C-terminus: Outer surface protein A (273 aa).

The N-terminal stretch at 1–16 is a signal peptide; that stretch reads MKKYLLGIGLILALIA. Cysteine 17 carries the N-palmitoyl cysteine lipid modification. Cysteine 17 carries the S-diacylglycerol cysteine lipid modification.

It belongs to the OspA lipoprotein family.

It localises to the cell outer membrane. The protein resides in the cell surface. The sequence is that of Outer surface protein A from Borreliella burgdorferi (Lyme disease spirochete).